The primary structure comprises 710 residues: Polyribonucleotide nucleotidyltransferase (710 aa).

Residues Asp-487 and Asp-493 each contribute to the Mg(2+) site. The KH domain maps to 554–613 (PKIITMTINPDKIRDVIGPSGKQINKIIEETGVKIDIEQDGTVFISSIDQQMNEKAKKII). The S1 motif domain occupies 623-691 (GEIYLGKVKR…KQGRVNLSRK (69 aa)).

It belongs to the polyribonucleotide nucleotidyltransferase family. Requires Mg(2+) as cofactor.

The protein resides in the cytoplasm. It catalyses the reaction RNA(n+1) + phosphate = RNA(n) + a ribonucleoside 5'-diphosphate. Functionally, involved in mRNA degradation. Catalyzes the phosphorolysis of single-stranded polyribonucleotides processively in the 3'- to 5'-direction. This is Polyribonucleotide nucleotidyltransferase from Bacillus cytotoxicus (strain DSM 22905 / CIP 110041 / 391-98 / NVH 391-98).